Consider the following 366-residue polypeptide: Protein FAM110B (366 aa).

3 disordered regions span residues 127-152 (SSEG…DTTD), 163-182 (KVYP…HVSR), and 216-252 (CSSS…RPSL). Phosphoserine occurs at positions 234 and 297. The segment at 313–333 (DCEQSQDSNSDLRNDDSANDR) is disordered. A compositionally biased stretch (basic and acidic residues) spans 322–331 (SDLRNDDSAN).

The protein belongs to the FAM110 family.

The protein localises to the cytoplasm. It is found in the cytoskeleton. Its subcellular location is the microtubule organizing center. It localises to the centrosome. This is Protein FAM110B (Fam110b) from Mus musculus (Mouse).